A 163-amino-acid chain; its full sequence is Ureidoglycolate lyase (163 aa).

This sequence belongs to the ureidoglycolate lyase family. In terms of assembly, homodimer. The cofactor is Ni(2+).

It carries out the reaction (S)-ureidoglycolate = urea + glyoxylate. It participates in nitrogen metabolism; (S)-allantoin degradation. Its function is as follows. Catalyzes the catabolism of the allantoin degradation intermediate (S)-ureidoglycolate, generating urea and glyoxylate. Involved in the utilization of allantoin as nitrogen source. The chain is Ureidoglycolate lyase from Mesorhizobium japonicum (strain LMG 29417 / CECT 9101 / MAFF 303099) (Mesorhizobium loti (strain MAFF 303099)).